The primary structure comprises 301 residues: Cell division control protein 2 homolog 1 (301 aa).

One can recognise a Protein kinase domain in the interval 5-297; the sequence is YERLQKIGEG…AAQALEHPYF (293 aa). ATP-binding positions include 11–19 and lysine 34; that span reads IGEGSYGVV. Serine 15 bears the Phosphoserine mark. Tyrosine 16 is subject to Phosphotyrosine. The active-site Proton acceptor is aspartate 127. At threonine 160 the chain carries Phosphothreonine; by CAK.

This sequence belongs to the protein kinase superfamily. CMGC Ser/Thr protein kinase family. CDC2/CDKX subfamily. In terms of assembly, forms a stable but non-covalent complex with a regulatory subunit and with a cyclin.

The catalysed reaction is L-seryl-[protein] + ATP = O-phospho-L-seryl-[protein] + ADP + H(+). It catalyses the reaction L-threonyl-[protein] + ATP = O-phospho-L-threonyl-[protein] + ADP + H(+). Phosphorylation at Ser-15 or Tyr-16 inactivates the enzyme, while phosphorylation at Thr-160 activates it. Probably involved in the control of the cell cycle. This is Cell division control protein 2 homolog 1 (CRK1) from Trypanosoma brucei brucei.